The sequence spans 498 residues: Aspartyl/glutamyl-tRNA(Asn/Gln) amidotransferase subunit B (498 aa).

The protein belongs to the GatB/GatE family. GatB subfamily. Heterotrimer of A, B and C subunits.

It carries out the reaction L-glutamyl-tRNA(Gln) + L-glutamine + ATP + H2O = L-glutaminyl-tRNA(Gln) + L-glutamate + ADP + phosphate + H(+). The catalysed reaction is L-aspartyl-tRNA(Asn) + L-glutamine + ATP + H2O = L-asparaginyl-tRNA(Asn) + L-glutamate + ADP + phosphate + 2 H(+). Functionally, allows the formation of correctly charged Asn-tRNA(Asn) or Gln-tRNA(Gln) through the transamidation of misacylated Asp-tRNA(Asn) or Glu-tRNA(Gln) in organisms which lack either or both of asparaginyl-tRNA or glutaminyl-tRNA synthetases. The reaction takes place in the presence of glutamine and ATP through an activated phospho-Asp-tRNA(Asn) or phospho-Glu-tRNA(Gln). In Erythrobacter litoralis (strain HTCC2594), this protein is Aspartyl/glutamyl-tRNA(Asn/Gln) amidotransferase subunit B.